Here is a 104-residue protein sequence, read N- to C-terminus: L-rhamnose mutarotase (104 aa).

Tyrosine 18 lines the substrate pocket. Histidine 22 acts as the Proton donor in catalysis. Substrate contacts are provided by residues tyrosine 41 and 76–77 (WW).

Belongs to the rhamnose mutarotase family. In terms of assembly, homodimer.

It localises to the cytoplasm. The enzyme catalyses alpha-L-rhamnose = beta-L-rhamnose. It functions in the pathway carbohydrate metabolism; L-rhamnose metabolism. In terms of biological role, involved in the anomeric conversion of L-rhamnose. The protein is L-rhamnose mutarotase of Lactiplantibacillus plantarum (strain ATCC BAA-793 / NCIMB 8826 / WCFS1) (Lactobacillus plantarum).